A 355-amino-acid polypeptide reads, in one-letter code: 45 kDa calcium-binding protein (355 aa).

The signal sequence occupies residues 1 to 29 (MASRQAPLCGLAPCCLWLLGVVLLMNASA). A glycan (N-linked (GlcNAc...) asparagine) is linked at asparagine 33. 2 consecutive EF-hand domains span residues 91–126 (KSRR…KTAE) and 130–165 (EAVA…TKGH). Serine 92 is modified (phosphoserine). Aspartate 104, asparagine 106, aspartate 108, arginine 110, glutamate 115, aspartate 143, aspartate 145, aspartate 147, histidine 149, and glutamate 154 together coordinate Ca(2+). Threonine 186 and threonine 210 each carry phosphothreonine. EF-hand domains lie at 226-261 (MLQF…TVEN), 271-306 (WVRD…MNEF), and 307-342 (SALN…FTGS). Ca(2+) contacts are provided by aspartate 239, aspartate 241, aspartate 243, lysine 245, and glutamate 250. Threonine 258 carries the post-translational modification Phosphothreonine. Residues aspartate 284, asparagine 286, and aspartate 288 each contribute to the Ca(2+) site. The residue at position 292 (threonine 292) is a Phosphothreonine. Positions 295, 320, 322, 324, 326, and 331 each coordinate Ca(2+). The interval 302-355 (PMNEFSALNEAKQMIAIADENQNHYLEPEEVLKYSEFFTGSKLVDYARSVHEEF) is necessary for intracellular retention in Golgi apparatus lumen.

Belongs to the CREC family.

Its subcellular location is the golgi apparatus lumen. May regulate calcium-dependent activities in the endoplasmic reticulum lumen or post-ER compartment. This chain is 45 kDa calcium-binding protein (SDF4), found in Bos taurus (Bovine).